The following is a 115-amino-acid chain: NADH-ubiquinone oxidoreductase chain 3 (115 aa).

A run of 3 helical transmembrane segments spans residues 3-23 (VMLT…IAFW), 55-75 (FFLV…LLPL), and 84-104 (LTTM…SLAY).

It belongs to the complex I subunit 3 family. Core subunit of respiratory chain NADH dehydrogenase (Complex I) which is composed of 45 different subunits. Interacts with TMEM186. Interacts with TMEM242.

The protein resides in the mitochondrion inner membrane. It catalyses the reaction a ubiquinone + NADH + 5 H(+)(in) = a ubiquinol + NAD(+) + 4 H(+)(out). Core subunit of the mitochondrial membrane respiratory chain NADH dehydrogenase (Complex I) which catalyzes electron transfer from NADH through the respiratory chain, using ubiquinone as an electron acceptor. Essential for the catalytic activity of complex I. The chain is NADH-ubiquinone oxidoreductase chain 3 from Canis lupus familiaris (Dog).